We begin with the raw amino-acid sequence, 146 residues long: MLTINSIKNGIVIDHIQAGHGIKIFKYLGLEEADYRVALIMNAESSKLGKKDIIKIENIMEIDYKVLGFIDPTITIDVIENETIKEKIKLELPKTIENVIKCKNPRCITSIENYIPNEFYLVDEENGEYRCKYCDEIYSGGDINKL.

The Zn(2+) site is built by Cys-102, Cys-107, Cys-131, and Cys-134.

It belongs to the PyrI family. Contains catalytic and regulatory chains. Requires Zn(2+) as cofactor.

Involved in allosteric regulation of aspartate carbamoyltransferase. The polypeptide is Aspartate carbamoyltransferase regulatory chain (Clostridium botulinum (strain Okra / Type B1)).